The primary structure comprises 216 residues: Protein-L-isoaspartate O-methyltransferase (216 aa).

Ser-61 is an active-site residue.

Belongs to the methyltransferase superfamily. L-isoaspartyl/D-aspartyl protein methyltransferase family.

It localises to the cytoplasm. It carries out the reaction [protein]-L-isoaspartate + S-adenosyl-L-methionine = [protein]-L-isoaspartate alpha-methyl ester + S-adenosyl-L-homocysteine. In terms of biological role, catalyzes the methyl esterification of L-isoaspartyl residues in peptides and proteins that result from spontaneous decomposition of normal L-aspartyl and L-asparaginyl residues. It plays a role in the repair and/or degradation of damaged proteins. This chain is Protein-L-isoaspartate O-methyltransferase, found in Dinoroseobacter shibae (strain DSM 16493 / NCIMB 14021 / DFL 12).